The chain runs to 191 residues: Molybdenum cofactor guanylyltransferase (191 aa).

GTP contacts are provided by residues 13 to 15, Lys-26, Asp-72, and Asp-102; that span reads LAG. A Mg(2+)-binding site is contributed by Asp-102.

It belongs to the MobA family. Monomer. Mg(2+) serves as cofactor.

The protein resides in the cytoplasm. The catalysed reaction is Mo-molybdopterin + GTP + H(+) = Mo-molybdopterin guanine dinucleotide + diphosphate. Functionally, transfers a GMP moiety from GTP to Mo-molybdopterin (Mo-MPT) cofactor (Moco or molybdenum cofactor) to form Mo-molybdopterin guanine dinucleotide (Mo-MGD) cofactor. This Pseudomonas putida (Arthrobacter siderocapsulatus) protein is Molybdenum cofactor guanylyltransferase.